The sequence spans 521 residues: MAKAATPKTTAAAEAKPAAKAPAKKAAPKTTAAAKPAATKSGAPKAAAAGAIGHITQVIGAVVDVKFPEGQLPLILNALEVDNQGHRLVLEVAQHLGEDTVRTIAMDATEGLVRGQEARDTGEPIMVPVGVETLGRIMNVIGEPVDEAGPIKTKATRAIHQNAPEYIEQSTEAEILVTGIKVVDLLAPYAKGGKIGLFGGAGVGKTVLIMELINNVAKAHGGYSVFAGVGERTREGNDLYHEMIESGVNKLGGGEGSKAALVYGQMNEPPGARARVALSGLTVAENFRDQGQDVLFFVDNIFRFTQAGSEVSALLGRIPSAVGYQPTLATDMGAMQERITTTTKGSITSVQAIYVPADDLTDPAPATSFAHLDATTVLSRSIAEKGIYPAVDPLDSTSRMLDPKVVGEEHYAVARQVQSILQRYKALQDIIAILGMDELSEEDKLTVARARKIERFLSQPFFVAEVFTGSPGKLVDLADTIKGFKGLCAGDYDHLPEAAFYMVGSIEEALEKAKKLAAEAA.

Low complexity-rich tracts occupy residues Met-1–Ala-21 and Pro-28–Gly-42. The segment at Met-1 to Gly-42 is disordered. Gly-199–Thr-206 contributes to the ATP binding site.

Belongs to the ATPase alpha/beta chains family. F-type ATPases have 2 components, CF(1) - the catalytic core - and CF(0) - the membrane proton channel. CF(1) has five subunits: alpha(3), beta(3), gamma(1), delta(1), epsilon(1). CF(0) has three main subunits: a(1), b(2) and c(9-12). The alpha and beta chains form an alternating ring which encloses part of the gamma chain. CF(1) is attached to CF(0) by a central stalk formed by the gamma and epsilon chains, while a peripheral stalk is formed by the delta and b chains.

Its subcellular location is the cell inner membrane. The enzyme catalyses ATP + H2O + 4 H(+)(in) = ADP + phosphate + 5 H(+)(out). Its function is as follows. Produces ATP from ADP in the presence of a proton gradient across the membrane. The catalytic sites are hosted primarily by the beta subunits. The polypeptide is ATP synthase subunit beta (Brucella canis (strain ATCC 23365 / NCTC 10854 / RM-666)).